A 264-amino-acid polypeptide reads, in one-letter code: S-adenosylmethionine decarboxylase proenzyme (264 aa).

Residue Ser112 is the Schiff-base intermediate with substrate; via pyruvic acid of the active site. Ser112 bears the Pyruvic acid (Ser); by autocatalysis mark. Catalysis depends on His117, which acts as the Proton acceptor; for processing activity. The active-site Proton donor; for catalytic activity is Cys140.

This sequence belongs to the prokaryotic AdoMetDC family. Type 2 subfamily. In terms of assembly, heterooctamer of four alpha and four beta chains arranged as a tetramer of alpha/beta heterodimers. Pyruvate is required as a cofactor. In terms of processing, is synthesized initially as an inactive proenzyme. Formation of the active enzyme involves a self-maturation process in which the active site pyruvoyl group is generated from an internal serine residue via an autocatalytic post-translational modification. Two non-identical subunits are generated from the proenzyme in this reaction, and the pyruvate is formed at the N-terminus of the alpha chain, which is derived from the carboxyl end of the proenzyme. The post-translation cleavage follows an unusual pathway, termed non-hydrolytic serinolysis, in which the side chain hydroxyl group of the serine supplies its oxygen atom to form the C-terminus of the beta chain, while the remainder of the serine residue undergoes an oxidative deamination to produce ammonia and the pyruvoyl group blocking the N-terminus of the alpha chain.

It carries out the reaction S-adenosyl-L-methionine + H(+) = S-adenosyl 3-(methylsulfanyl)propylamine + CO2. Its pathway is amine and polyamine biosynthesis; S-adenosylmethioninamine biosynthesis; S-adenosylmethioninamine from S-adenosyl-L-methionine: step 1/1. Catalyzes the decarboxylation of S-adenosylmethionine to S-adenosylmethioninamine (dcAdoMet), the propylamine donor required for the synthesis of the polyamines spermine and spermidine from the diamine putrescine. The polypeptide is S-adenosylmethionine decarboxylase proenzyme (Shigella boydii serotype 4 (strain Sb227)).